Reading from the N-terminus, the 623-residue chain is Transketolase (623 aa).

M1 bears the N-acetylmethionine mark. Residues K6 and K11 each carry the N6-acetyllysine modification. H37 provides a ligand contact to substrate. Residues S40 and H77 each coordinate thiamine diphosphate. S104 carries the post-translational modification Phosphoserine. 123-125 lines the thiamine diphosphate pocket; that stretch reads GSL. At K144 the chain carries N6-acetyllysine. D155 contributes to the Mg(2+) binding site. Thiamine diphosphate is bound by residues G156 and N185. Residues N185 and L187 each contribute to the Mg(2+) site. An N6-acetyllysine mark is found at K204, K232, and K241. Thiamine diphosphate-binding residues include K244 and H258. Residue H258 participates in substrate binding. K260 is modified (N6-acetyllysine). Y275 carries the post-translational modification Phosphotyrosine. At T287 the chain carries Phosphothreonine. S295 is modified (phosphoserine). Substrate contacts are provided by R318 and S345. S345 is subject to Phosphoserine. A Glycyl lysine isopeptide (Lys-Gly) (interchain with G-Cter in SUMO2) cross-link involves residue K352. The active-site Proton donor is E366. F392 is a binding site for thiamine diphosphate. The substrate site is built by H416 and D424. Q428 contributes to the thiamine diphosphate binding site. Residue R474 coordinates substrate. N6-acetyllysine is present on residues K538 and K603.

Belongs to the transketolase family. In terms of assembly, homodimer. Mg(2+) serves as cofactor. Ca(2+) is required as a cofactor. It depends on Mn(2+) as a cofactor. Requires Co(2+) as cofactor. The cofactor is thiamine diphosphate.

The catalysed reaction is D-sedoheptulose 7-phosphate + D-glyceraldehyde 3-phosphate = aldehydo-D-ribose 5-phosphate + D-xylulose 5-phosphate. Catalyzes the transfer of a two-carbon ketol group from a ketose donor to an aldose acceptor, via a covalent intermediate with the cofactor thiamine pyrophosphate. The polypeptide is Transketolase (Tkt) (Mus musculus (Mouse)).